Reading from the N-terminus, the 437-residue chain is ATP-dependent protease ATPase subunit HslU (437 aa).

ATP is bound by residues Val-18, 60 to 65 (GVGKTE), Asp-249, Glu-315, and Arg-387.

Belongs to the ClpX chaperone family. HslU subfamily. As to quaternary structure, a double ring-shaped homohexamer of HslV is capped on each side by a ring-shaped HslU homohexamer. The assembly of the HslU/HslV complex is dependent on binding of ATP.

The protein localises to the cytoplasm. Its function is as follows. ATPase subunit of a proteasome-like degradation complex; this subunit has chaperone activity. The binding of ATP and its subsequent hydrolysis by HslU are essential for unfolding of protein substrates subsequently hydrolyzed by HslV. HslU recognizes the N-terminal part of its protein substrates and unfolds these before they are guided to HslV for hydrolysis. The chain is ATP-dependent protease ATPase subunit HslU from Rhodospirillum centenum (strain ATCC 51521 / SW).